A 209-amino-acid polypeptide reads, in one-letter code: ATP-dependent Clp protease proteolytic subunit (209 aa).

Catalysis depends on serine 106, which acts as the Nucleophile. Histidine 131 is a catalytic residue.

This sequence belongs to the peptidase S14 family. Fourteen ClpP subunits assemble into 2 heptameric rings which stack back to back to give a disk-like structure with a central cavity, resembling the structure of eukaryotic proteasomes.

The protein localises to the cytoplasm. The enzyme catalyses Hydrolysis of proteins to small peptides in the presence of ATP and magnesium. alpha-casein is the usual test substrate. In the absence of ATP, only oligopeptides shorter than five residues are hydrolyzed (such as succinyl-Leu-Tyr-|-NHMec, and Leu-Tyr-Leu-|-Tyr-Trp, in which cleavage of the -Tyr-|-Leu- and -Tyr-|-Trp bonds also occurs).. In terms of biological role, cleaves peptides in various proteins in a process that requires ATP hydrolysis. Has a chymotrypsin-like activity. Plays a major role in the degradation of misfolded proteins. The chain is ATP-dependent Clp protease proteolytic subunit from Brucella melitensis biotype 2 (strain ATCC 23457).